Reading from the N-terminus, the 578-residue chain is Protein SIA1 (578 aa).

The N-terminal stretch at 1-28 (MFRNRRILLYARRFFLVWICFLFITSWS) is a signal peptide.

Its function is as follows. May be involved in the activation of the plasma membrane proton-ATPase by glucose. This Kluyveromyces lactis (strain ATCC 8585 / CBS 2359 / DSM 70799 / NBRC 1267 / NRRL Y-1140 / WM37) (Yeast) protein is Protein SIA1 (SIA1).